The sequence spans 253 residues: Electron transfer flavoprotein subunit beta, mitochondrial (253 aa).

Belongs to the ETF beta-subunit/FixA family. In terms of assembly, heterodimer of an alpha and a beta subunit. It depends on FAD as a cofactor. Requires AMP as cofactor.

The protein resides in the mitochondrion matrix. The electron transfer flavoprotein serves as a specific electron acceptor for several dehydrogenases, including five acyl-CoA dehydrogenases, glutaryl-CoA and sarcosine dehydrogenase. It transfers the electrons to the main mitochondrial respiratory chain via ETF-ubiquinone oxidoreductase (ETF dehydrogenase). The protein is Electron transfer flavoprotein subunit beta, mitochondrial (ETFB) of Oryza sativa subsp. japonica (Rice).